Consider the following 226-residue polypeptide: Cytochrome c biogenesis ATP-binding export protein CcmA (226 aa).

The ABC transporter domain maps to 19–226 (LRANDLAFSR…LGGAHALPPA (208 aa)). Residue 51 to 58 (GPNGSGKS) coordinates ATP.

Belongs to the ABC transporter superfamily. CcmA exporter (TC 3.A.1.107) family. As to quaternary structure, the complex is composed of two ATP-binding proteins (CcmA) and two transmembrane proteins (CcmB).

It localises to the cell inner membrane. The enzyme catalyses heme b(in) + ATP + H2O = heme b(out) + ADP + phosphate + H(+). Part of the ABC transporter complex CcmAB involved in the biogenesis of c-type cytochromes; once thought to export heme, this seems not to be the case, but its exact role is uncertain. Responsible for energy coupling to the transport system. The polypeptide is Cytochrome c biogenesis ATP-binding export protein CcmA (Cupriavidus pinatubonensis (strain JMP 134 / LMG 1197) (Cupriavidus necator (strain JMP 134))).